Here is a 220-residue protein sequence, read N- to C-terminus: 3-dehydroquinate dehydratase (220 aa).

Residues 29-31 and Arg56 each bind 3-dehydroquinate; that span reads EFR. Residue His116 is the Proton donor/acceptor of the active site. Residue Lys142 is the Schiff-base intermediate with substrate of the active site. 3-dehydroquinate contacts are provided by Arg180, Ser200, and Gln204.

This sequence belongs to the type-I 3-dehydroquinase family. As to quaternary structure, homodimer.

The enzyme catalyses 3-dehydroquinate = 3-dehydroshikimate + H2O. The protein operates within metabolic intermediate biosynthesis; chorismate biosynthesis; chorismate from D-erythrose 4-phosphate and phosphoenolpyruvate: step 3/7. Its function is as follows. Involved in the third step of the chorismate pathway, which leads to the biosynthesis of aromatic amino acids. Catalyzes the cis-dehydration of 3-dehydroquinate (DHQ) and introduces the first double bond of the aromatic ring to yield 3-dehydroshikimate. In Methanocaldococcus jannaschii (strain ATCC 43067 / DSM 2661 / JAL-1 / JCM 10045 / NBRC 100440) (Methanococcus jannaschii), this protein is 3-dehydroquinate dehydratase.